We begin with the raw amino-acid sequence, 698 residues long: Capon-like protein (698 aa).

The PID domain maps to 25 to 194 (FFHGITFQAK…SELLDVEQIS (170 aa)). A disordered region spans residues 191–240 (EQISEQQLSEDGERGGGDNETPKKEHLAITPDLNHTQPQRPNHLDIMPSH). Over residues 201 to 217 (DGERGGGDNETPKKEHL) the composition is skewed to basic and acidic residues. Coiled coils occupy residues 265-327 (RSEI…LASL), 379-484 (NQQL…LNAN), and 554-583 (LNED…GNLA). The segment covering 396–423 (SQHLQNLQQQQQQQQQQQQQQTQAAPTA) has biased composition (low complexity). The tract at residues 396–460 (SQHLQNLQQQ…QQQQQQQQDA (65 aa)) is disordered. The segment covering 436–447 (YPSMSALQSISN) has biased composition (polar residues). A compositionally biased stretch (low complexity) spans 448-458 (QLQQQQQQQQQ). The segment at 588-698 (GGSTSTRDTS…RTTWARHTTK (111 aa)) is disordered. Residues 590–640 (STSTRDTSRSSSTLDSPSSPRLRSSNNNISPGSSNGNQNHNNNSNSNSSSS) show a composition bias toward low complexity. Composition is skewed to polar residues over residues 662–672 (LSATPSFITRS) and 679–698 (NRSQ…HTTK).

In terms of tissue distribution, expressed at higher level in wing imaginal disk.

Putative adapter protein. In Drosophila melanogaster (Fruit fly), this protein is Capon-like protein.